Reading from the N-terminus, the 215-residue chain is Cytochrome b6 (215 aa).

The chain crosses the membrane as a helical span at residues 32–52 (IFHCLGGITLTCFLVQVATGF). Cysteine 35 is a heme c binding site. Residues histidine 86 and histidine 100 each contribute to the heme b site. A run of 3 helical transmembrane segments spans residues 90 to 110 (ASMM…TGGF), 116 to 136 (LTWV…VTGY), and 186 to 206 (LHTF…FPMI). Heme b-binding residues include histidine 187 and histidine 202.

It belongs to the cytochrome b family. PetB subfamily. The 4 large subunits of the cytochrome b6-f complex are cytochrome b6, subunit IV (17 kDa polypeptide, PetD), cytochrome f and the Rieske protein, while the 4 small subunits are PetG, PetL, PetM and PetN. The complex functions as a dimer. Heme b is required as a cofactor. Requires heme c as cofactor.

It is found in the plastid. Its subcellular location is the chloroplast thylakoid membrane. In terms of biological role, component of the cytochrome b6-f complex, which mediates electron transfer between photosystem II (PSII) and photosystem I (PSI), cyclic electron flow around PSI, and state transitions. In Calycanthus floridus var. glaucus (Eastern sweetshrub), this protein is Cytochrome b6.